A 253-amino-acid polypeptide reads, in one-letter code: Bacitracin export ATP-binding protein BceA (253 aa).

The region spanning 4–243 (LEATNIHKSY…TFFKDIMKTQ (240 aa)) is the ABC transporter domain. 40–47 (GASGSGKT) lines the ATP pocket.

The protein belongs to the ABC transporter superfamily. As to quaternary structure, the complex is composed of two ATP-binding proteins (BceA) and two transmembrane proteins (BceB).

In terms of biological role, part of the ABC transporter complex BceAB (TC 3.A.1.123.5) involved in bacitracin export. Responsible for energy coupling to the transport system. In Halalkalibacterium halodurans (strain ATCC BAA-125 / DSM 18197 / FERM 7344 / JCM 9153 / C-125) (Bacillus halodurans), this protein is Bacitracin export ATP-binding protein BceA (bceA).